The primary structure comprises 474 residues: Trehalose-6-phosphate synthase (474 aa).

Arg10 contacts D-glucose 6-phosphate. Residue 22–23 coordinates UDP-alpha-D-glucose; that stretch reads GG. Positions 77 and 131 each coordinate D-glucose 6-phosphate. 2 residues coordinate UDP-alpha-D-glucose: Arg263 and Lys268. Position 301 (Arg301) interacts with D-glucose 6-phosphate. Residues Phe340 and 366-370 each bind UDP-alpha-D-glucose; that span reads LVAKE.

It belongs to the glycosyltransferase 20 family. As to quaternary structure, homotetramer.

It carries out the reaction D-glucose 6-phosphate + UDP-alpha-D-glucose = alpha,alpha-trehalose 6-phosphate + UDP + H(+). It participates in glycan biosynthesis; trehalose biosynthesis. Its function is as follows. Probably involved in the osmoprotection via the biosynthesis of trehalose. Catalyzes the transfer of glucose from UDP-alpha-D-glucose (UDP-Glc) to D-glucose 6-phosphate (Glc-6-P) to form trehalose-6-phosphate. Acts with retention of the anomeric configuration of the UDP-sugar donor. The polypeptide is Trehalose-6-phosphate synthase (Cronobacter sakazakii (strain ATCC BAA-894) (Enterobacter sakazakii)).